The chain runs to 87 residues: Small ribosomal subunit protein bS20 (87 aa).

Residues 1 to 22 (MAHHKSALKRIKQNKRKQFRNK) are disordered.

It belongs to the bacterial ribosomal protein bS20 family.

Functionally, binds directly to 16S ribosomal RNA. This chain is Small ribosomal subunit protein bS20, found in Geobacter metallireducens (strain ATCC 53774 / DSM 7210 / GS-15).